A 260-amino-acid polypeptide reads, in one-letter code: tRNA pseudouridine synthase C (260 aa).

The active site involves Asp-54.

The protein belongs to the pseudouridine synthase RluA family.

It carries out the reaction uridine(65) in tRNA = pseudouridine(65) in tRNA. In terms of biological role, responsible for synthesis of pseudouridine from uracil-65 in transfer RNAs. The polypeptide is tRNA pseudouridine synthase C (truC) (Escherichia coli O6:H1 (strain CFT073 / ATCC 700928 / UPEC)).